The primary structure comprises 96 residues: ATP synthase subunit f, mitochondrial (96 aa).

It belongs to the ATPase F chain family.

The protein localises to the mitochondrion. It is found in the mitochondrion inner membrane. Functionally, mitochondrial membrane ATP synthase (F(1)F(0) ATP synthase or Complex V) produces ATP from ADP in the presence of a proton gradient across the membrane which is generated by electron transport complexes of the respiratory chain. F-type ATPases consist of two structural domains, F(1) - containing the extramembraneous catalytic core and F(0) - containing the membrane proton channel, linked together by a central stalk and a peripheral stalk. During catalysis, ATP synthesis in the catalytic domain of F(1) is coupled via a rotary mechanism of the central stalk subunits to proton translocation. The protein is ATP synthase subunit f, mitochondrial (atp17) of Schizosaccharomyces pombe (strain 972 / ATCC 24843) (Fission yeast).